A 254-amino-acid polypeptide reads, in one-letter code: Allene oxide cyclase 4, chloroplastic (254 aa).

Residues 1–52 (MIMASSAAASISMITLRNLSRNHQSHQSTFLGFSRSFHNQRISSNSPGLSTR) constitute a chloroplast transit peptide.

This sequence belongs to the allene oxide cyclase family. As to expression, highly expressed in fully developed leaves.

Its subcellular location is the plastid. It is found in the chloroplast. The catalysed reaction is (9Z,13S,15Z)-12,13-epoxyoctadeca-9,11,15-trienoate = (9S,13S,15Z)-12-oxophyto-10,15-dienoate. Involved in the production of 12-oxo-phytodienoic acid (OPDA), a precursor of jasmonic acid. In Arabidopsis thaliana (Mouse-ear cress), this protein is Allene oxide cyclase 4, chloroplastic (AOC4).